The chain runs to 157 residues: XylDLEGF operon transcriptional activator 2 (157 aa).

Positions 39 to 140 (ERVVQFIEEN…GELPSDTLSL (102 aa)) constitute an HTH araC/xylS-type domain. DNA-binding regions (H-T-H motif) lie at residues 56–77 (EQLA…EKHT) and 107–130 (ITEV…RSTF).

The protein localises to the cytoplasm. In terms of biological role, regulatory protein of the TOL plasmid xyl operons. XylS activates the xylXYZLTEGFJQKIH operon required for the degradation of toluene, m-xylene and p-xylene. This Pseudomonas putida (Arthrobacter siderocapsulatus) protein is XylDLEGF operon transcriptional activator 2 (xylS2).